We begin with the raw amino-acid sequence, 175 residues long: Sec-independent protein translocase protein TatB (175 aa).

The helical transmembrane segment at 1 to 21 (MLDLGLSKMALIGVVALVVLG) threads the bilayer. A compositionally biased stretch (low complexity) spans 96 to 115 (VSPGGSAAADAPDGPSAASG). Disordered stretches follow at residues 96–119 (VSPG…EPSW) and 152–175 (QVQS…ARFL). The span at 160–175 (VARHRPASLRRPARFL) shows a compositional bias: basic residues.

The protein belongs to the TatB family. The Tat system comprises two distinct complexes: a TatABC complex, containing multiple copies of TatA, TatB and TatC subunits, and a separate TatA complex, containing only TatA subunits. Substrates initially bind to the TatABC complex, which probably triggers association of the separate TatA complex to form the active translocon.

Its subcellular location is the cell inner membrane. In terms of biological role, part of the twin-arginine translocation (Tat) system that transports large folded proteins containing a characteristic twin-arginine motif in their signal peptide across membranes. Together with TatC, TatB is part of a receptor directly interacting with Tat signal peptides. TatB may form an oligomeric binding site that transiently accommodates folded Tat precursor proteins before their translocation. The polypeptide is Sec-independent protein translocase protein TatB (Burkholderia pseudomallei (strain 1710b)).